A 429-amino-acid chain; its full sequence is 3-phosphoshikimate 1-carboxyvinyltransferase (429 aa).

3-phosphoshikimate is bound by residues K20, S21, and R25. K20 lines the phosphoenolpyruvate pocket. The phosphoenolpyruvate site is built by G89 and R118. S164, S165, Q166, S192, D311, and K338 together coordinate 3-phosphoshikimate. Q166 lines the phosphoenolpyruvate pocket. The active-site Proton acceptor is the D311. Phosphoenolpyruvate is bound by residues R342 and R384.

Belongs to the EPSP synthase family. In terms of assembly, monomer.

Its subcellular location is the cytoplasm. The catalysed reaction is 3-phosphoshikimate + phosphoenolpyruvate = 5-O-(1-carboxyvinyl)-3-phosphoshikimate + phosphate. The protein operates within metabolic intermediate biosynthesis; chorismate biosynthesis. Its function is as follows. Catalyzes the transfer of the enolpyruvyl moiety of phosphoenolpyruvate (PEP) to the 5-hydroxyl of shikimate-3-phosphate (S3P) to produce enolpyruvyl shikimate-3-phosphate and inorganic phosphate. The polypeptide is 3-phosphoshikimate 1-carboxyvinyltransferase (Methanococcus maripaludis (strain C6 / ATCC BAA-1332)).